The chain runs to 476 residues: Protein transport protein Sec61 subunit alpha (476 aa).

Residues 2–33 (GIKFLEVIKPFCAVLPEIQKPERKIQFREKVL) are Cytoplasmic-facing. A helical membrane pass occupies residues 34–53 (WTAITLFIFLVCCQIPLFGI). Residues 54–76 (MSSDSADPFYWMRVILASNRGTL) are Lumenal-facing. Residues 77-96 (MELGISPIVTSGLIMQLLAG) form a helical membrane-spanning segment. Residues 97–117 (AKIIEVGDTPKDRALFNGAQK) are Cytoplasmic-facing. A helical transmembrane segment spans residues 118 to 138 (LFGMIITIGQAIVYVMTGMYG). Topologically, residues 139 to 144 (DPSEMG) are lumenal. A helical transmembrane segment spans residues 145-165 (AGICLVIIIQLFVAGLIVLLL). Residues 166-172 (DELLQKG) are Cytoplasmic-facing. Residues 173-193 (YGLGSGISLFIATNICETIVW) traverse the membrane as a helical segment. Residues 194 to 240 (KAFSPTTVNTGRGTEFEGAIIALFHLLATRTDKVRALREAFYRQNLP) are Lumenal-facing. A helical transmembrane segment spans residues 241 to 261 (NLMNLIATVFVFAVVIYFQGF). The Cytoplasmic segment spans residues 262 to 288 (RVDLPIKSARYRGQYNTYPIKLFYTSN). A helical transmembrane segment spans residues 289-309 (IPIILQSALVSNLYVISQMLS). The Lumenal portion of the chain corresponds to 310 to 354 (TRFSGNFLVNLLGTWSDTSTGGPARAYPVGGLCYYFSPPESFGSV). Residues 355–375 (LDDPVHASIYIVFMLGSCAFF) traverse the membrane as a helical segment. Residues 376-420 (SKTWIEVSGSSAKDVAKQLKEQQMVMRGHRETSMVHELNRYIPTA) lie on the Cytoplasmic side of the membrane. A helical membrane pass occupies residues 421 to 441 (AAFGGLCIGGLSVMADFLGAI). Over 442-445 (GSGT) the chain is Lumenal. The helical transmembrane segment at 446–462 (GILLAVTIIYQYFEIFV) threads the bilayer. At 463–476 (KEQSEMGSMGALLF) the chain is on the cytoplasmic side.

This sequence belongs to the SecY/SEC61-alpha family. As to quaternary structure, the SEC61 channel-forming translocon complex consists of channel-forming core components SEC61A1, SEC61B and SEC61G and different auxiliary components such as SEC62 and SEC63. The SEC61 channel associates with the multi-pass translocon (MPT) complex.

It localises to the endoplasmic reticulum membrane. In terms of biological role, component of SEC61 channel-forming translocon complex that mediates transport of signal peptide-containing precursor polypeptides across the endoplasmic reticulum (ER). Forms a ribosome receptor and a gated pore in the ER membrane, both functions required for cotranslational translocation of nascent polypeptides. May cooperate with auxiliary protein SEC62, SEC63 and HSPA5/BiP to enable post-translational transport of small presecretory proteins. The SEC61 channel is also involved in ER membrane insertion of transmembrane proteins: it mediates membrane insertion of the first few transmembrane segments of proteins, while insertion of subsequent transmembrane regions of multi-pass membrane proteins is mediated by the multi-pass translocon (MPT) complex. In Gadus ogac (Greenland cod), this protein is Protein transport protein Sec61 subunit alpha (sec61a).